The primary structure comprises 486 residues: Cobyric acid synthase (486 aa).

One can recognise a GATase cobBQ-type domain in the interval 248–439 (MLRVVVPVLP…VHGLFDTPAA (192 aa)). The active-site Nucleophile is Cys329. The active site involves His431.

The protein belongs to the CobB/CobQ family. CobQ subfamily.

It participates in cofactor biosynthesis; adenosylcobalamin biosynthesis. Its function is as follows. Catalyzes amidations at positions B, D, E, and G on adenosylcobyrinic A,C-diamide. NH(2) groups are provided by glutamine, and one molecule of ATP is hydrogenolyzed for each amidation. The chain is Cobyric acid synthase from Paraburkholderia phytofirmans (strain DSM 17436 / LMG 22146 / PsJN) (Burkholderia phytofirmans).